The following is a 1596-amino-acid chain: Transcription factor Zelda (1596 aa).

Disordered regions lie at residues 1–143, 209–273, and 490–530; these read MTSI…QQQQ, SGLG…GGAA, and TSPA…SVLP. Low complexity predominate over residues 13 to 24; sequence AAEALASSSATD. Gly residues predominate over residues 25–53; the sequence is SGGGGAGGGGGGGGGGSGGPGAGGTGGVG. Polar residues predominate over residues 60 to 72; it reads NATISAAADSSDN. 2 stretches are compositionally biased toward low complexity: residues 73–123 and 226–267; these read QPGT…ITHQ and SAPS…QTPG. Residues 501-518 show a composition bias toward gly residues; the sequence is GGPGQEGAAGAAPGGGYR. The C2H2-type 1 zinc finger occupies 552-576; sequence YNCTACNKWFTSSGHLKRHYNTTLH. Disordered regions lie at residues 578 to 813, 825 to 945, 1017 to 1074, and 1252 to 1322; these read NAVK…TTTA, EDSN…MGML, GEQH…MPLT, and QMQH…TTLP. Over residues 610–634 the composition is skewed to low complexity; the sequence is RGNAAAAAAAAAAAASASGQGQQQQ. The segment covering 635 to 653 has biased composition (pro residues); it reads PPIPPPPANVPPPEPPRSP. Positions 656-668 are enriched in gly residues; that stretch reads YGGGGGLGVGAMG. Residues 673–682 are compositionally biased toward polar residues; it reads SQYSASPSPT. Composition is skewed to low complexity over residues 683-709 and 719-753; these read QQQQ…GYGY and NASP…HHNS. Over residues 768–781 the composition is skewed to polar residues; that stretch reads PHNNNTTQMPSSQM. Low complexity predominate over residues 796–813; sequence TTTRAPQITTTATTTTTA. Basic residues predominate over residues 830–840; sequence THTHTHTHPNH. Residues 849–858 show a composition bias toward low complexity; that stretch reads SSSSSSSMAT. Residues 864-877 are compositionally biased toward basic and acidic residues; sequence QELRDQEQADDHLH. Positions 879–916 are enriched in low complexity; it reads HQQASQQYLLSARHYHSSTPNTLSSSNTNPSTPSSNSP. Residues 904-1297 are transactivation activation domain (TAD); that stretch reads SNTNPSTPSS…PLAKKRRGGN (394 aa). Over residues 921–932 the composition is skewed to polar residues; the sequence is RQEQQGTDFSRT. Residues 933–944 are compositionally biased toward pro residues; sequence TPPPQPLPPMGM. Positions 1019–1036 are enriched in basic and acidic residues; that stretch reads QHQRQEADHHQQQRELHQ. Composition is skewed to low complexity over residues 1037-1062 and 1252-1275; these read LDQQ…SPTS and QMQH…QQQQ. 2 stretches are compositionally biased toward polar residues: residues 1276–1286 and 1309–1322; these read ILADQTQTMAQ and SSVG…TTLP. Residues 1326–1349 form a C2H2-type 2 zinc finger; the sequence is IKCLECDKEFTKNCYLTQHNKSFH. The C2H2-type 3; degenerate zinc-finger motif lies at 1355-1378; it reads FRCQKCGKRFQSEDVYTTHLGRHR. 2 consecutive C2H2-type zinc fingers follow at residues 1384–1407 and 1413–1435; these read HKCE…EAIH and HMCD…LETH.

Zygotically expressed in the developing embryonic germ layers, nervous system, imaginal disk primordia and in larval wing and eye disks. In terms of tissue distribution, detected in the germline cells of the ovary, in unfertilized eggs and throughout early development. Later, it becomes mostly restricted to the nervous system and specific head regions. Also expressed in imaginal wing disks in third instar larvae.

It localises to the nucleus. Its subcellular location is the chromosome. Functionally, transcription factor required for zygotic genome activation (ZGA), a critical event in early embryonic development during which the developmental control passes from maternally provided mRNAs to the expression of the zygotic genome after fertilization. Binds to regulatory DNA sequences containing a 5'-CAGGTAG-3' sequence motif, which are highly enriched among developmental enhancers. Within 1 hour into development, or by the embryo's 8th nuclear cycle, binds the majority of its motifs genome-wide. Zelda-binding promotes nucleosome depletion and chromatin accessibility, thereby facilitating the binding of patterning transcription factors, including the binding of the dorsoventral patterning transcription factors dorsal (dl) and twist (twi), and the anteroposterior patterning transcription factors bicoid (bcd) and caudal (cad). Promotes the activity of patterning transcription factors, such as bcd and dl, by lowering the concentration threshold required for transcriptional activation. Required both for the earliest (minor) and major waves of transcription during ZGA. Also involved in maternal mRNA clearance during the maternal-to-zygote transition by promoting expression of microRNAs (miRNAs), such as miR-1, miR-9a and miR-309, which mediate degradation of maternally-loaded RNAs. Also involved in post-blastoderm development: nvolved in nervous system development by maintaining neuroblasts in an undifferentiated state and equired for wing disk development. Constitutes the main isoform expressed throughout development. Transcription factor required for zygotic genome activation (ZGA). In terms of biological role, acts as a dominant negative inhibitor of transcription factor activity of isoform A. The protein is Transcription factor Zelda of Drosophila melanogaster (Fruit fly).